The chain runs to 302 residues: Sulfate adenylyltransferase subunit 2 (302 aa).

The protein belongs to the PAPS reductase family. CysD subfamily. In terms of assembly, heterodimer composed of CysD, the smaller subunit, and CysN.

It catalyses the reaction sulfate + ATP + H(+) = adenosine 5'-phosphosulfate + diphosphate. It participates in sulfur metabolism; hydrogen sulfide biosynthesis; sulfite from sulfate: step 1/3. Its function is as follows. With CysN forms the ATP sulfurylase (ATPS) that catalyzes the adenylation of sulfate producing adenosine 5'-phosphosulfate (APS) and diphosphate, the first enzymatic step in sulfur assimilation pathway. APS synthesis involves the formation of a high-energy phosphoric-sulfuric acid anhydride bond driven by GTP hydrolysis by CysN coupled to ATP hydrolysis by CysD. The polypeptide is Sulfate adenylyltransferase subunit 2 (Parabacteroides distasonis (strain ATCC 8503 / DSM 20701 / CIP 104284 / JCM 5825 / NCTC 11152)).